The sequence spans 122 residues: Early nodulin-10 (122 aa).

The first 36 residues, 1-36, serve as a signal peptide directing secretion; sequence MTCTLKSPPKMASFFLSSLVLMFIAALILLPQGLAA. 10 repeat units span residues 45 to 49, 51 to 55, 58 to 62, 68 to 72, 77 to 81, 82 to 86, 88 to 92, 99 to 103, 106 to 110, and 113 to 117. Residues 45–117 form a 10 X 5 AA approximate repeats of P-P-X-X-X region; it reads PPDSELPPYR…FYKQAPPSQK (73 aa). Residues 90–122 are disordered; that stretch reads TYKPSKKRLPPPFQKLPPFYKQAPPSQKLPRVN.

As to expression, root nodules. In early nodules, expressed only in the interior of the developing nodule with no expression in other nodule tissues, including meristem. In slightly older nodules, expressed in almost all cells of the central zone. In more mature nodules, expression is restricted to the invasion zone.

This Medicago sativa (Alfalfa) protein is Early nodulin-10 (ENOD10).